Consider the following 488-residue polypeptide: MEGTEARQRRLEGCGRLKELGPLPSHDAGRLPKASEEGHLAVSESQLVDAKSLEAPPGRETSLIIGFQVVIPFLLAGVGLSWAGLLLNYFQHWPVFKDVKDLMTLVPPLVGLKGNLEMTLASRLSTSANTGQIDDRQERYKIISSNLAVVQVQATVVGLLAAVASLMLGTVSHEEFDWSKVALLCTSSVITAFLAALALGILMICIVIGARKFGVNPDNIATPIAASLGDLITLSILALMSSFFYSHKDTWYLTPLVCVGFLALTPLWLFIAKQNPPIMKILKYGWFPIILAMIISSFGGLILSKTISKHEFKGMAVLTPVMCGVGGNLVAIQTSRISTFLHMWSTPGVLPVQMKRFWPNPCFIFCSSEINSVSARVLLFLVVPGHLIFFYLICLVEGQSVTNSKIFILLYLVAGVVQVVILLYLAEVTVRLTWHQALDPDNHCIPYLTGLGDLLGTSLLALCFFLDWLLRGRANLQELVSELVSVPP.

Composition is skewed to basic and acidic residues over residues 1-19 (MEGTEARQRRLEGCGRLKE) and 27-36 (DAGRLPKASE). The interval 1–36 (MEGTEARQRRLEGCGRLKELGPLPSHDAGRLPKASE) is disordered. The next 9 membrane-spanning stretches (helical) occupy residues 63-83 (LIIGFQVVIPFLLAGVGLSWA), 147-167 (LAVVQVQATVVGLLAAVASLM), 189-209 (VITAFLAALALGILMICIVIG), 220-240 (IATPIAASLGDLITLSILALM), 251-271 (WYLTPLVCVGFLALTPLWLFI), 284-304 (YGWFPIILAMIISSFGGLILS), 377-397 (VLLFLVVPGHLIFFYLICLVE), 406-426 (IFILLYLVAGVVQVVILLYLA), and 450-470 (GLGDLLGTSLLALCFFLDWLL).

It belongs to the SLC41A transporter family.

Its subcellular location is the mitochondrion inner membrane. The catalysed reaction is Mg(2+)(in) + 2 Na(+)(out) = Mg(2+)(out) + 2 Na(+)(in). Functionally, na(+)/Mg(2+) ion exchanger that acts as a predominant Mg(2+) efflux system at the mitochondrial inner membrane. This is Solute carrier family 41 member 3 (Slc41a3) from Mus musculus (Mouse).